Consider the following 248-residue polypeptide: uncharacterized protein (248 aa).

9-33 (IITGASSGIGEATAILLAEKGAKLV) contacts NADP(+). A substrate-binding site is contributed by Ser-141. Tyr-154 acts as the Proton acceptor in catalysis.

The protein belongs to the short-chain dehydrogenases/reductases (SDR) family.

This is an uncharacterized protein from Listeria innocua serovar 6a (strain ATCC BAA-680 / CLIP 11262).